The sequence spans 344 residues: MKNLGAAILAVICLQYADSAAVFDRNFTKPYVLKKTWVQNFIKFQYIFEGNQGKAKIVPLGCAPTNVDGDNYLKPGERTFQHDFVFSCEEGEDGVLNYEAIACIDTQGEIMHPGETRSLSNGTVILHCNLYGGALKKVVERAAGCYFNETIYPEEEKWVEPQVNPNDTSIDGRLMQCFRPHYSYYESHVVGCVIGKLGVLIDEFGQLLDGSYVKCVESEFGHVSLKSANVDELACTMDNKTYAHASQWTDVKKGANMRCNYRHIVKESCVLGTEILPIGQEVPVSRDCIFLCHPQTNVYICDNSLEEFKIVESNGDDLGPVEENKIVEKLPENKKKSLKSVFKF.

This is an uncharacterized protein from Caenorhabditis elegans.